The chain runs to 511 residues: MRIIPRTMSTQHPDNAKVPEWAKSEVIEGEDEVKEAFLAYSMYGVHEVMWDAEGKDVDTHVVRKLLSNYPDYFREHILGKDLFLTYRLPNPKVEGADRKVFAETMESIPITYDLAEKFYGNGITIPVFEVILPMTTSSLEIISVARYYEKAVANEDELELYDGVKVKDLVGEIYPKVIEVIPLVEDRDSLQNINNIVEGYYKVIKPKYMRVFLARSDPAMNYGMITAVLSVKIALSELYKLSESLNFEIYPIIGVGSLPFRGHLSPENYEKVLEEYKGVYTYTIQSAFKYDYDYDKVKSAISSINNSRISPARILEKYEEDVLRKITILYTERYQPIIESLANAINDVSVLLPRRRARKLHIGLFGYSRSAGKVSLPRAISFVGSLYSIGIPPELIGISSLSNLDEKEWDIFKQNYVNFKHDLQTAARFLNWESFKLIKDIWKISEDTIAKIKEDIDYAESVIGIKLGGIDYDSRKHILMSSLFLLSFKEKILQESKKYLYEMALIRRSLG.

Belongs to the PEPCase type 2 family. In terms of assembly, homotetramer. Mg(2+) is required as a cofactor.

It catalyses the reaction oxaloacetate + phosphate = phosphoenolpyruvate + hydrogencarbonate. Its activity is regulated as follows. Allosterically inhibited by L-aspartate and L-malate. PEPC activity is not affected by allosteric activators of E.coli PEPC such as glucose 6-phosphate, fructose 1,6-bisphosphate, and acetyl coenzyme A. In terms of biological role, catalyzes the irreversible beta-carboxylation of phosphoenolpyruvate (PEP) to form oxaloacetate (OAA), a four-carbon dicarboxylic acid source for the tricarboxylic acid cycle. The sequence is that of Phosphoenolpyruvate carboxylase from Saccharolobus solfataricus (strain ATCC 35092 / DSM 1617 / JCM 11322 / P2) (Sulfolobus solfataricus).